Here is a 653-residue protein sequence, read N- to C-terminus: Protein fem-1 homolog A (653 aa).

ANK repeat units lie at residues 2–31 (DLHTAVYNAARDGKLQLLQKLLSGRSREEL), 40–70 (SGGTPLLIAARYGHLDVVEYLVDRCGASVEA), 82–111 (EGAPPLWAASAAGHLDVVRSLLRRGASVNR), 115–145 (TNSTPLRAACFDGHLEVVRYLVGEHQADLEV), 149–178 (HGHTCLMISCYKGHREIARYLLEQGAQVNR), 182–211 (KGNTALHDCAESGSLEILQLLLGCNARMER), and 214–243 (YGMTPLLAASVTGHTNIVEYLIQEQPAGDE). At serine 108 the chain carries Phosphoserine. Residues 242 to 274 (DEQAQPGLARVQPQGARSSPEEPPSGESYESCC) form a disordered region. TPR repeat units follow at residues 282–316 (VEALELLGATYVDKKRDLLGALKHWRRAMELRHQG) and 374–407 (SYYIRYRGAVYADSGNFERCIRLWKYALDMQQNN). ANK repeat units follow at residues 518-560 (NGFT…DPDS) and 564-593 (DNNTPLHIAAQNNCPGIMNALIEAGAHMDA).

Belongs to the fem-1 family. In terms of assembly, component of a CRL2 E3 ubiquitin-protein ligase complex, also named ECS (Elongin BC-CUL2/5-SOCS-box protein) complex, composed of CUL2, Elongin BC (ELOB and ELOC), RBX1 and substrate-specific adapter FEM1A. Interacts with PTGER4. Interacts with NFKB1; the interaction is direct. Phosphorylated; highly phosphorylated in myoblasts and myotubes. Phosphorylation at Ser-108 promotes PGE2-EP4-mediated inhibition of inflammation. Dephosphorylated by protein phosphatase 2A (PP2A).

Its subcellular location is the mitochondrion. It is found in the cytoplasm. Its pathway is protein modification; protein ubiquitination. Functionally, substrate-recognition component of a Cul2-RING (CRL2) E3 ubiquitin-protein ligase complex of the DesCEND (destruction via C-end degrons) pathway, which recognizes a C-degron located at the extreme C terminus of target proteins, leading to their ubiquitination and degradation. The C-degron recognized by the DesCEND pathway is usually a motif of less than ten residues and can be present in full-length proteins, truncated proteins or proteolytically cleaved forms. The CRL2(FEM1A) complex specifically recognizes proteins with an arginine at the C-terminus: recognizes and binds proteins ending with -Lys/Arg-Xaa-Arg and -Lys/Arg-Xaa-Xaa-Arg C-degrons, such as SIL1 or OR51B2, leading to their ubiquitination and degradation. Involved in PGE2-EP4-mediated inhibition of inflammation of macrophages via interaction with NFKB1 and PTGER4. Promotes inflammation in brain microglia through MAP2K4/MKK4-mediated signaling. The protein is Protein fem-1 homolog A of Bos taurus (Bovine).